Here is a 343-residue protein sequence, read N- to C-terminus: Heat-inducible transcription repressor HrcA (343 aa).

This sequence belongs to the HrcA family.

Functionally, negative regulator of class I heat shock genes (grpE-dnaK-dnaJ and groELS operons). Prevents heat-shock induction of these operons. The protein is Heat-inducible transcription repressor HrcA of Bacillus pumilus (strain SAFR-032).